A 61-amino-acid polypeptide reads, in one-letter code: Large ribosomal subunit protein bL32 (61 aa).

Residues 1-16 show a composition bias toward basic residues; sequence MAVPKRKTSPSRRGMR. Positions 1-44 are disordered; that stretch reads MAVPKRKTSPSRRGMRRSADALKAPTYVEDKDSGELRRPHHIDL. The span at 28-44 shows a compositional bias: basic and acidic residues; that stretch reads VEDKDSGELRRPHHIDL.

The protein belongs to the bacterial ribosomal protein bL32 family.

This is Large ribosomal subunit protein bL32 from Methylobacterium nodulans (strain LMG 21967 / CNCM I-2342 / ORS 2060).